Consider the following 177-residue polypeptide: Thymidine kinase (177 aa).

Position 11–18 (11–18 (GPMFSGKS)) interacts with ATP. Catalysis depends on Glu83, which acts as the Proton acceptor. Phe113 provides a ligand contact to substrate. Positions 138 and 141 each coordinate Zn(2+). 157 to 161 (IEIIG) serves as a coordination point for substrate. Positions 170 and 173 each coordinate Zn(2+).

The protein belongs to the thymidine kinase family. In terms of assembly, homotetramer. Two molecules of substrate bind to each enzyme tetramer.

It carries out the reaction thymidine + ATP = dTMP + ADP + H(+). Functionally, phosphorylates thymidine and thymidine analogs, such as azidothymidine (AZT). Part of the salvage pathway for pyrimidine deoxyribonucleotide synthesis. In Vaccinia virus (strain Tian Tan) (VACV), this protein is Thymidine kinase (OPG101).